The chain runs to 223 residues: Deoxyribose-phosphate aldolase (223 aa).

The active-site Proton donor/acceptor is D89. K152 functions as the Schiff-base intermediate with acetaldehyde in the catalytic mechanism. K181 (proton donor/acceptor) is an active-site residue.

This sequence belongs to the DeoC/FbaB aldolase family. DeoC type 1 subfamily.

Its subcellular location is the cytoplasm. It catalyses the reaction 2-deoxy-D-ribose 5-phosphate = D-glyceraldehyde 3-phosphate + acetaldehyde. The protein operates within carbohydrate degradation; 2-deoxy-D-ribose 1-phosphate degradation; D-glyceraldehyde 3-phosphate and acetaldehyde from 2-deoxy-alpha-D-ribose 1-phosphate: step 2/2. Its function is as follows. Catalyzes a reversible aldol reaction between acetaldehyde and D-glyceraldehyde 3-phosphate to generate 2-deoxy-D-ribose 5-phosphate. The polypeptide is Deoxyribose-phosphate aldolase (Bacillus mycoides (strain KBAB4) (Bacillus weihenstephanensis)).